The chain runs to 108 residues: uncharacterized protein (108 aa).

To M.jannaschii MJ1245 and M.thermoautotrophicum MTH1110.

This is an uncharacterized protein from Methanocaldococcus jannaschii (strain ATCC 43067 / DSM 2661 / JAL-1 / JCM 10045 / NBRC 100440) (Methanococcus jannaschii).